The primary structure comprises 264 residues: Zinc import ATP-binding protein ZnuC (264 aa).

The region spanning 20-235 (VQLKNIEVTF…PNFIHFFGDQ (216 aa)) is the ABC transporter domain. 52–59 (GPNGGGKS) provides a ligand contact to ATP.

The protein belongs to the ABC transporter superfamily. Zinc importer (TC 3.A.1.15.5) family. As to quaternary structure, the complex is composed of two ATP-binding proteins (ZnuC), two transmembrane proteins (ZnuB) and a solute-binding protein (ZnuA).

The protein localises to the cell inner membrane. It catalyses the reaction Zn(2+)(out) + ATP(in) + H2O(in) = Zn(2+)(in) + ADP(in) + phosphate(in) + H(+)(in). Functionally, part of the ABC transporter complex ZnuABC involved in zinc import. Responsible for energy coupling to the transport system. The protein is Zinc import ATP-binding protein ZnuC of Haemophilus ducreyi (strain 35000HP / ATCC 700724).